We begin with the raw amino-acid sequence, 113 residues long: Retrotransposon Gag-like protein 8A (113 aa).

Belongs to the FAM127 family.

This Homo sapiens (Human) protein is Retrotransposon Gag-like protein 8A.